The chain runs to 490 residues: GTPase Der (490 aa).

2 EngA-type G domains span residues 3–166 (PVVA…MEDL) and 203–376 (IKLA…DSST). Residues 9-16 (GRPNVGKS), 56-60 (DTGGI), 118-121 (NKTD), 209-216 (GRPNVGKS), 256-260 (DTAGV), and 321-324 (NKWD) each bind GTP. Positions 377 to 461 (RRVGTSMLTR…PIRIQFKEGE (85 aa)) constitute a KH-like domain.

The protein belongs to the TRAFAC class TrmE-Era-EngA-EngB-Septin-like GTPase superfamily. EngA (Der) GTPase family. As to quaternary structure, associates with the 50S ribosomal subunit.

Its function is as follows. GTPase that plays an essential role in the late steps of ribosome biogenesis. The chain is GTPase Der from Escherichia coli O157:H7.